Reading from the N-terminus, the 252-residue chain is 2-succinyl-6-hydroxy-2,4-cyclohexadiene-1-carboxylate synthase (252 aa).

The protein belongs to the AB hydrolase superfamily. MenH family. In terms of assembly, monomer.

It catalyses the reaction 5-enolpyruvoyl-6-hydroxy-2-succinyl-cyclohex-3-ene-1-carboxylate = (1R,6R)-6-hydroxy-2-succinyl-cyclohexa-2,4-diene-1-carboxylate + pyruvate. The protein operates within quinol/quinone metabolism; 1,4-dihydroxy-2-naphthoate biosynthesis; 1,4-dihydroxy-2-naphthoate from chorismate: step 3/7. It functions in the pathway quinol/quinone metabolism; menaquinone biosynthesis. Functionally, catalyzes a proton abstraction reaction that results in 2,5-elimination of pyruvate from 2-succinyl-5-enolpyruvyl-6-hydroxy-3-cyclohexene-1-carboxylate (SEPHCHC) and the formation of 2-succinyl-6-hydroxy-2,4-cyclohexadiene-1-carboxylate (SHCHC). The chain is 2-succinyl-6-hydroxy-2,4-cyclohexadiene-1-carboxylate synthase from Salmonella heidelberg (strain SL476).